Reading from the N-terminus, the 88-residue chain is Large ribosomal subunit protein bL27 (88 aa).

The tract at residues 1 to 21 (MAHKKGASSSRNGRDSNAKRL) is disordered.

It belongs to the bacterial ribosomal protein bL27 family.

In Thermobifida fusca (strain YX), this protein is Large ribosomal subunit protein bL27.